We begin with the raw amino-acid sequence, 89 residues long: Cornifin-B (89 aa).

Residues 1-29 (MSSQQQKQPCTPPPQLQQQQVKQPCQPPP) are disordered. 8 repeat units span residues 3–14 (SQQQKQPCTPPP), 18–29 (QQQVKQPCQPPP), 31–38 (EPCIPKTK), 39–46 (EPCHPKVP), 47–54 (EPCHPKVP), 55–62 (EPCQPKVP), 63–70 (EPCHPKVP), and 71–78 (EPCPSIVT). A 2 X 12 AA approximate repeats region spans residues 3-29 (SQQQKQPCTPPPQLQQQQVKQPCQPPP). Residues 31 to 78 (EPCIPKTKEPCHPKVPEPCHPKVPEPCQPKVPEPCHPKVPEPCPSIVT) form a 6 X 8 AA approximate tandem repeats region.

The protein belongs to the cornifin (SPRR) family. In terms of processing, the N-terminus is blocked. As to expression, suprabasal layers of squamous-differentiated tissues such as epidermis, esophagus, tongue and trachea.

It is found in the cytoplasm. Its function is as follows. Cross-linked envelope protein of keratinocytes. It is a keratinocyte protein that first appears in the cell cytosol, but ultimately becomes cross-linked to membrane proteins by transglutaminase. All that results in the formation of an insoluble envelope beneath the plasma membrane. Can function as both amine donor and acceptor in transglutaminase-mediated cross-linkage. The polypeptide is Cornifin-B (SPRR1B) (Homo sapiens (Human)).